A 296-amino-acid chain; its full sequence is Glycine--tRNA ligase alpha subunit (296 aa).

Belongs to the class-II aminoacyl-tRNA synthetase family. Tetramer of two alpha and two beta subunits.

The protein resides in the cytoplasm. The catalysed reaction is tRNA(Gly) + glycine + ATP = glycyl-tRNA(Gly) + AMP + diphosphate. The chain is Glycine--tRNA ligase alpha subunit from Parasynechococcus marenigrum (strain WH8102).